The sequence spans 583 residues: 2-succinyl-5-enolpyruvyl-6-hydroxy-3-cyclohexene-1-carboxylate synthase (583 aa).

Belongs to the TPP enzyme family. MenD subfamily. Homodimer. Requires Mg(2+) as cofactor. It depends on Mn(2+) as a cofactor. Thiamine diphosphate is required as a cofactor.

It carries out the reaction isochorismate + 2-oxoglutarate + H(+) = 5-enolpyruvoyl-6-hydroxy-2-succinyl-cyclohex-3-ene-1-carboxylate + CO2. It participates in quinol/quinone metabolism; 1,4-dihydroxy-2-naphthoate biosynthesis; 1,4-dihydroxy-2-naphthoate from chorismate: step 2/7. It functions in the pathway quinol/quinone metabolism; menaquinone biosynthesis. Its function is as follows. Catalyzes the thiamine diphosphate-dependent decarboxylation of 2-oxoglutarate and the subsequent addition of the resulting succinic semialdehyde-thiamine pyrophosphate anion to isochorismate to yield 2-succinyl-5-enolpyruvyl-6-hydroxy-3-cyclohexene-1-carboxylate (SEPHCHC). The chain is 2-succinyl-5-enolpyruvyl-6-hydroxy-3-cyclohexene-1-carboxylate synthase from Chlorobium phaeovibrioides (strain DSM 265 / 1930) (Prosthecochloris vibrioformis (strain DSM 265)).